We begin with the raw amino-acid sequence, 340 residues long: Zinc finger protein 488 (340 aa).

Residues Ala-72–Asp-187 form an important for transcriptional repression activity region. Residues Leu-77 to Phe-180 are disordered. Positions Lys-82–Pro-91 are enriched in pro residues. Over residues Pro-106–Pro-125 the composition is skewed to basic and acidic residues. 2 C2H2-type zinc fingers span residues Asn-275–His-302 and Leu-317–His-339. Positions His-298 to Pro-305 match the Nuclear localization signal motif.

This sequence belongs to the krueppel C2H2-type zinc-finger protein family. Interacts with OLIG2.

It localises to the nucleus. Its function is as follows. Transcriptional repressor. Plays a role in oligodendrocyte differentiation, together with OLIG2. Mediates Notch signaling-activated formation of oligodendrocyte precursors. Promotes differentiation of adult neural stem progenitor cells (NSPCs) into mature oligodendrocytes and contributes to remyelination following nerve injury. The protein is Zinc finger protein 488 (ZNF488) of Homo sapiens (Human).